A 219-amino-acid polypeptide reads, in one-letter code: Response regulator ArlR (219 aa).

One can recognise a Response regulatory domain in the interval 3-116 (QILIVEDEQN…ELLARIRAIL (114 aa)). 4-aspartylphosphate is present on D52. Positions 122–219 (KDIIDVNGIT…TVRGVGYVIR (98 aa)) form a DNA-binding region, ompR/PhoB-type.

In terms of processing, phosphorylated by ArlS.

It localises to the cytoplasm. In terms of biological role, member of the two-component regulatory system ArlS/ArlR involved in the regulation of adhesion, autolysis, multidrug resistance and virulence. In Staphylococcus aureus (strain USA300), this protein is Response regulator ArlR (arlR).